A 471-amino-acid polypeptide reads, in one-letter code: Glutamate--tRNA ligase (471 aa).

Residues 9 to 19 (PSPTGYLHVGG) carry the 'HIGH' region motif. Residues cysteine 98, cysteine 100, cysteine 125, and aspartate 127 each contribute to the Zn(2+) site. The 'KMSKS' region signature appears at 237-241 (KLSKR). Residue lysine 240 coordinates ATP.

Belongs to the class-I aminoacyl-tRNA synthetase family. Glutamate--tRNA ligase type 1 subfamily. In terms of assembly, monomer. The cofactor is Zn(2+).

Its subcellular location is the cytoplasm. It catalyses the reaction tRNA(Glu) + L-glutamate + ATP = L-glutamyl-tRNA(Glu) + AMP + diphosphate. Catalyzes the attachment of glutamate to tRNA(Glu) in a two-step reaction: glutamate is first activated by ATP to form Glu-AMP and then transferred to the acceptor end of tRNA(Glu). This is Glutamate--tRNA ligase from Yersinia pseudotuberculosis serotype IB (strain PB1/+).